Here is a 57-residue protein sequence, read N- to C-terminus: Large ribosomal subunit protein bL32 (57 aa).

This sequence belongs to the bacterial ribosomal protein bL32 family.

The protein is Large ribosomal subunit protein bL32 of Staphylococcus saprophyticus subsp. saprophyticus (strain ATCC 15305 / DSM 20229 / NCIMB 8711 / NCTC 7292 / S-41).